A 383-amino-acid chain; its full sequence is GA-binding protein subunit beta-1 (383 aa).

N-acetylserine is present on Ser2. ANK repeat units follow at residues 5-34 and 37-66; these read DLGK…PFTT and LGTS…SRDA. N6-acetyllysine is present on Lys69. ANK repeat units lie at residues 70–99, 103–132, and 136–166; these read VDRT…DVNA, LKMT…DVHT, and FCKT…QINT. N6-acetyllysine occurs at positions 340 and 369.

Heterotetramer of two alpha and two beta subunits. Interacts with HCFC1, causing repression of transcriptional activity. Acetylated by EP300/p300. Deacetylated by SIRT7, promoting heterotetramerization and activity.

The protein resides in the nucleus. Its function is as follows. Transcription factor capable of interacting with purine rich repeats (GA repeats). Acts as a master regulator of nuclear-encoded mitochondrial genes. The protein is GA-binding protein subunit beta-1 (GABPB1) of Bos taurus (Bovine).